The following is a 252-amino-acid chain: 2-succinyl-6-hydroxy-2,4-cyclohexadiene-1-carboxylate synthase (252 aa).

The protein belongs to the AB hydrolase superfamily. MenH family. In terms of assembly, monomer.

It carries out the reaction 5-enolpyruvoyl-6-hydroxy-2-succinyl-cyclohex-3-ene-1-carboxylate = (1R,6R)-6-hydroxy-2-succinyl-cyclohexa-2,4-diene-1-carboxylate + pyruvate. It functions in the pathway quinol/quinone metabolism; 1,4-dihydroxy-2-naphthoate biosynthesis; 1,4-dihydroxy-2-naphthoate from chorismate: step 3/7. It participates in quinol/quinone metabolism; menaquinone biosynthesis. Catalyzes a proton abstraction reaction that results in 2,5-elimination of pyruvate from 2-succinyl-5-enolpyruvyl-6-hydroxy-3-cyclohexene-1-carboxylate (SEPHCHC) and the formation of 2-succinyl-6-hydroxy-2,4-cyclohexadiene-1-carboxylate (SHCHC). The sequence is that of 2-succinyl-6-hydroxy-2,4-cyclohexadiene-1-carboxylate synthase from Escherichia coli (strain K12 / MC4100 / BW2952).